Here is a 129-residue protein sequence, read N- to C-terminus: Glycine cleavage system H protein (129 aa).

The Lipoyl-binding domain maps to 24 to 106; it reads VFTVGISEHA…YGDGWLFKIK (83 aa). N6-lipoyllysine is present on K65.

This sequence belongs to the GcvH family. In terms of assembly, the glycine cleavage system is composed of four proteins: P, T, L and H. (R)-lipoate serves as cofactor.

Functionally, the glycine cleavage system catalyzes the degradation of glycine. The H protein shuttles the methylamine group of glycine from the P protein to the T protein. The chain is Glycine cleavage system H protein from Alteromonas mediterranea (strain DSM 17117 / CIP 110805 / LMG 28347 / Deep ecotype).